Consider the following 478-residue polypeptide: Methylenetetrahydrofolate--tRNA-(uracil-5-)-methyltransferase TrmFO (478 aa).

16-21 (GAGLAG) contacts FAD. The interval 429 to 448 (PLANPPTKGPDGKRLRGPEK) is disordered. Positions 438–448 (PDGKRLRGPEK) are enriched in basic and acidic residues.

It belongs to the MnmG family. TrmFO subfamily. The cofactor is FAD.

Its subcellular location is the cytoplasm. The enzyme catalyses uridine(54) in tRNA + (6R)-5,10-methylene-5,6,7,8-tetrahydrofolate + NADH + H(+) = 5-methyluridine(54) in tRNA + (6S)-5,6,7,8-tetrahydrofolate + NAD(+). The catalysed reaction is uridine(54) in tRNA + (6R)-5,10-methylene-5,6,7,8-tetrahydrofolate + NADPH + H(+) = 5-methyluridine(54) in tRNA + (6S)-5,6,7,8-tetrahydrofolate + NADP(+). In terms of biological role, catalyzes the folate-dependent formation of 5-methyl-uridine at position 54 (M-5-U54) in all tRNAs. This is Methylenetetrahydrofolate--tRNA-(uracil-5-)-methyltransferase TrmFO from Rhodopseudomonas palustris (strain ATCC BAA-98 / CGA009).